Consider the following 905-residue polypeptide: DNA mismatch repair protein MutS (905 aa).

The segment at 388-410 (LERPANPEGTYPTDAETSGDTLP) is disordered. An ATP-binding site is contributed by 638–645 (GPNMAGKS). A disordered region spans residues 826-847 (RDAARGTNSAPSRQTLPGLDLP). Polar residues predominate over residues 831–840 (GTNSAPSRQT).

The protein belongs to the DNA mismatch repair MutS family.

Functionally, this protein is involved in the repair of mismatches in DNA. It is possible that it carries out the mismatch recognition step. This protein has a weak ATPase activity. The chain is DNA mismatch repair protein MutS from Nitratidesulfovibrio vulgaris (strain DP4) (Desulfovibrio vulgaris).